The sequence spans 802 residues: Oligophrenin-1 (802 aa).

Residues 265 to 368 (QPTIEGYLYT…WMEAMDGKEP (104 aa)) enclose the PH domain. One can recognise a Rho-GAP domain in the interval 380 to 564 (MELNEVGFKF…ILIEHFGKIY (185 aa)). Disordered stretches follow at residues 569–588 (EESAAPPVPPPRVTARRHKP), 607–666 (LDES…EPCP), 680–770 (GGTK…NAGE), and 783–802 (FETASRKTGSSQGRLPGDES). Polar residues predominate over residues 616–627 (HQTPNGTITSSI). The segment covering 716 to 732 (HHKEGDADSFSKVRPPG) has biased composition (basic and acidic residues).

Interacts with HOMER1. Interacts with AMPA receptor complexes. Interacts with SH3GL2 (endophilin-A1). Interacts (via C-terminus) with NR1D1. In terms of tissue distribution, expressed in brain.

It is found in the postsynapse. Its subcellular location is the presynapse. The protein localises to the cell projection. It localises to the axon. The protein resides in the dendritic spine. It is found in the dendrite. Its subcellular location is the cytoplasm. Stimulates GTP hydrolysis of members of the Rho family. Its action on RHOA activity and signaling is implicated in growth and stabilization of dendritic spines, and therefore in synaptic function. Critical for the stabilization of AMPA receptors at postsynaptic sites. Critical for the regulation of synaptic vesicle endocytosis at presynaptic terminals. Required for the localization of NR1D1 to dendrites, can suppress its repressor activity and protect it from proteasomal degradation. The protein is Oligophrenin-1 (OPHN1) of Homo sapiens (Human).